We begin with the raw amino-acid sequence, 159 residues long: HSP70 co-chaperone SNL1 (159 aa).

The Perinuclear space segment spans residues methionine 1 to lysine 12. The helical; Signal-anchor for type II membrane protein transmembrane segment at leucine 13–isoleucine 35 threads the bilayer. The Cytoplasmic portion of the chain corresponds to arginine 36–lysine 159. The disordered stretch occupies residues asparagine 39–alanine 64. Basic residues predominate over residues lysine 44–lysine 58. The 87-residue stretch at glutamine 73–lysine 159 folds into the BAG domain.

Interacts with the HSP70 family members SSA1, SSA4, and SSB1. These interactions are strongly reduced by ADP and ATP.

Its subcellular location is the endoplasmic reticulum membrane. It is found in the nucleus membrane. Stimulator of ATPase activity of molecular chaperones of the HSP70 family (principally of the SSA class). Stimulation is important for HSP70-substrate complex dissociation after folding of newly synthesized or refolded proteins. SNL1 is probably involved in nuclear pore biogenesis and in particular the folding or refolding of misfolded NUP116, GLE2 and NIC96. This chain is HSP70 co-chaperone SNL1 (SNL1), found in Saccharomyces cerevisiae (strain ATCC 204508 / S288c) (Baker's yeast).